Reading from the N-terminus, the 306-residue chain is MSEVRIRPRQVLILIIVFLVVLMMVHRNGKRTCQGPEYLQAMFVQGDTLPTIYAVTPTYPRPAQKAELTRLSHLFMLLPHLHWIIVEDTNATTPLVRNLLDRAGLEKRSTLLNIKTPSEFKLKGKDPNWIKPRGVEQRNLALAWLRNHVDVDRHSIVFFMDDDNSYSTELFAEMSKIERGRVGVWPVGLVGGLMVERPLLTEDGTKVTGFNAAWRPERPFPIDMAAFAISMDLFIRNPQATFSYEVQRGYQESEILRHLTTRDQLQPLANRCTDVLVWHTRTEKTKLAAEEALLKKGQRSDGGMEV.

The Cytoplasmic segment spans residues 1–11; sequence MSEVRIRPRQV. The chain crosses the membrane as a helical; Signal-anchor for type II membrane protein span at residues 12 to 29; sequence LILIIVFLVVLMMVHRNG. At 30-306 the chain is on the lumenal side; it reads KRTCQGPEYL…GQRSDGGMEV (277 aa). N-linked (GlcNAc...) asparagine glycosylation occurs at Asn-90. Residue Asp-163 coordinates Mn(2+). Glu-252 serves as the catalytic Proton acceptor.

This sequence belongs to the glycosyltransferase 43 family. Requires Mn(2+) as cofactor.

It localises to the golgi apparatus membrane. The catalysed reaction is 3-O-(beta-D-galactosyl-(1-&gt;3)-beta-D-galactosyl-(1-&gt;4)-beta-D-xylosyl)-L-seryl-[protein] + UDP-alpha-D-glucuronate = 3-O-(beta-D-GlcA-(1-&gt;3)-beta-D-Gal-(1-&gt;3)-beta-D-Gal-(1-&gt;4)-beta-D-Xyl)-L-seryl-[protein] + UDP + H(+). It participates in protein modification; protein glycosylation. Functionally, involved in the biosynthesis of L2/HNK-1 carbohydrate epitope on both glycolipids and glycoproteins. Shows strict specificity for Gal-beta-1,3-Gal-beta-1,4-Xyl, exhibiting negligible incorporation into other galactoside substrates. The chain is Galactosylgalactosylxylosylprotein 3-beta-glucuronosyltransferase I (GlcAT-I) from Drosophila melanogaster (Fruit fly).